A 778-amino-acid polypeptide reads, in one-letter code: Serine/threonine-protein kinase BRSK1 (778 aa).

A compositionally biased stretch (gly residues) spans 1 to 12; it reads MSSGSKEGGGGS. Positions 1 to 29 are disordered; sequence MSSGSKEGGGGSPAYHLPHPHPHPPQHAQ. Residues 34-285 enclose the Protein kinase domain; that stretch reads YRLEKTLGKG…LEQIQKHPWY (252 aa). Residues 40-48 and Lys-63 each bind ATP; that span reads LGKGQTGLV. Asp-156 functions as the Proton acceptor in the catalytic mechanism. Phosphothreonine; by LKB1 is present on Thr-189. Residues 314–356 form the UBA domain; that stretch reads ELDPDVLESMASLGCFRDRERLHRELRSEEENQEKMIYYLLLD. Residues 362 to 383 are compositionally biased toward basic and acidic residues; the sequence is PSCEDQDLPPRNDVDPPRKRVD. Residues 362–548 form a disordered region; the sequence is PSCEDQDLPP…SPGGGVGGAA (187 aa). 4 positions are modified to phosphoserine: Ser-399, Ser-443, Ser-447, and Ser-450. Positions 430–457 are enriched in low complexity; sequence SRSVSGASTGLSSSPLSSPRSPVFSFSP. Residues Arg-466, Arg-481, Arg-484, and Arg-498 each carry the omega-N-methylarginine modification. Residues 491 to 508 are compositionally biased toward pro residues; it reads QPPPPSARSTPLPGPPGS. Ser-508 is subject to Phosphoserine. Residues 509 to 533 are compositionally biased toward low complexity; sequence PRSSGGTPLHSPLHTPRASPTGTPG. Arg-525 carries the post-translational modification Omega-N-methylarginine. Phosphothreonine occurs at positions 529 and 535. Arg-550 is subject to Omega-N-methylarginine. Residues 560–588 are disordered; sequence FLGSPRFHRRKMQVPTAEEMSSLTPESSP. Position 583 is a phosphothreonine (Thr-583). Ser-586, Ser-587, and Ser-601 each carry phosphoserine. The interval 719 to 778 is disordered; the sequence is QPSVQALADEKNGAQTRPAGTPPRSLQPPPGRSDPDLSSSPRRGPPKDKKLLATNGTPLP.

It belongs to the protein kinase superfamily. CAMK Ser/Thr protein kinase family. SNF1 subfamily. Mg(2+) serves as cofactor. Phosphorylated at Thr-189 by STK11/LKB1 in complex with STE20-related adapter-alpha (STRADA) pseudo kinase and CAB39. Not phosphorylated at Thr-189 by CaMKK2. In contrast, it is phosphorylated and activated by CaMKK1. May be inactivated via dephosphorylation of Thr-189 by PP2C. Present in the gray matter of the brain and spinal cord (at protein level). Expressed in the nervous system, distributed within the brain and spinal cord of embryonic and postnatal animals.

Its subcellular location is the cytoplasm. It localises to the nucleus. The protein resides in the cytoskeleton. It is found in the microtubule organizing center. The protein localises to the centrosome. Its subcellular location is the synapse. It localises to the presynaptic active zone. The protein resides in the cytoplasmic vesicle. It is found in the secretory vesicle. The protein localises to the synaptic vesicle. The enzyme catalyses L-seryl-[protein] + ATP = O-phospho-L-seryl-[protein] + ADP + H(+). It carries out the reaction L-threonyl-[protein] + ATP = O-phospho-L-threonyl-[protein] + ADP + H(+). The catalysed reaction is L-seryl-[tau protein] + ATP = O-phospho-L-seryl-[tau protein] + ADP + H(+). It catalyses the reaction L-threonyl-[tau protein] + ATP = O-phospho-L-threonyl-[tau protein] + ADP + H(+). Its activity is regulated as follows. Activated by phosphorylation on Thr-189 by STK11/LKB1. Serine/threonine-protein kinase that plays a key role in polarization of neurons and centrosome duplication. Phosphorylates CDC25B, CDC25C, MAPT/TAU, RIMS1, TUBG1, TUBG2 and WEE1. Following phosphorylation and activation by STK11/LKB1, acts as a key regulator of polarization of cortical neurons, probably by mediating phosphorylation of microtubule-associated proteins such as MAPT/TAU at 'Thr-504' and 'Ser-554'. Also regulates neuron polarization by mediating phosphorylation of WEE1 at 'Ser-642' in postmitotic neurons, leading to down-regulate WEE1 activity in polarized neurons. In neurons, localizes to synaptic vesicles and plays a role in neurotransmitter release, possibly by phosphorylating RIMS1. Also acts as a positive regulator of centrosome duplication by mediating phosphorylation of gamma-tubulin (TUBG1 and TUBG2) at 'Ser-131', leading to translocation of gamma-tubulin and its associated proteins to the centrosome. Involved in the UV-induced DNA damage checkpoint response, probably by inhibiting CDK1 activity through phosphorylation and activation of WEE1, and inhibition of CDC25B and CDC25C. The sequence is that of Serine/threonine-protein kinase BRSK1 (Brsk1) from Mus musculus (Mouse).